A 612-amino-acid polypeptide reads, in one-letter code: MDEADSWELYLALGLPKDATSDQIKESYYRLSRLFHPDRHTADQKAAAEEKFQIIQHAYEVLSDPSKKEIYDNFGEQGLKTDWNVGFPGKSAEELKNKIREQIQERDIHEIDSLVQSRSETTIVVNMTPLFARNIRVQNALGLGAGTRMLTPYERFSLIQWVSFQIKSSFSIPTSFSNDLKKPSFNSFSSGSFDDEFSAPSDEDEGNHKTSSRLSIVTEASMRQNSKLQPSIFAVYHSQPSPNLSSEIGFSLLRPGLITVKSVYAINNQTFIVPLIQISGLKRPPQATVVIGRQITRFGTLTARWKTGVWSLGSWGIASPRGANSSFSLTWQQMKAIPNSLVPQLSWNAEVTAGLMYSGIAYNYNLKNATEDSPYQIKLGTSMSTVGGLQVSGDTSRKVGRYSTFGVNISVGVPTGSITFSLNWSRLGQKISLPIMWCSVFDRSAVFWGLVFPITSILGVEQFFLRPRRLSNQKRLRLLRLQKLKDSQERKKVSAIRAVKLMKEIVEKKQKLEMEKGGLVIEYAEYRVVNCGANEPDLKQDVTISIAALVENSRLAIPSSVSKSSIIGIYPLFSDNEKELEIVYTFHQQRHRVVLRDKQGVFLPSREHKILS.

One can recognise a J domain in the interval 8–75 (ELYLALGLPK…SKKEIYDNFG (68 aa)). The helical transmembrane segment at 445–465 (AVFWGLVFPITSILGVEQFFL) threads the bilayer.

The protein belongs to the DnaJ family.

The protein localises to the membrane. This is an uncharacterized protein from Schizosaccharomyces pombe (strain 972 / ATCC 24843) (Fission yeast).